The chain runs to 162 residues: Disulfide bond formation protein B (162 aa).

Residues Met-1 to Ala-8 lie on the Cytoplasmic side of the membrane. Residues Val-9–Ala-25 traverse the membrane as a helical segment. Over Ala-26–Leu-43 the chain is Periplasmic. A disulfide bridge links Cys-35 with Cys-38. A helical transmembrane segment spans residues Cys-44–Pro-60. Over Lys-61 to Leu-67 the chain is Cytoplasmic. The helical transmembrane segment at Ser-68–Ala-85 threads the bilayer. The Periplasmic portion of the chain corresponds to Tyr-86 to Val-141. An intrachain disulfide couples Cys-101 to Cys-128. Residues Trp-142–Arg-160 traverse the membrane as a helical segment. Topologically, residues Ala-161–Lys-162 are cytoplasmic.

This sequence belongs to the DsbB family.

Its subcellular location is the cell inner membrane. Functionally, required for disulfide bond formation in some periplasmic proteins. Acts by oxidizing the DsbA protein. This chain is Disulfide bond formation protein B, found in Neisseria gonorrhoeae (strain ATCC 700825 / FA 1090).